The sequence spans 65 residues: Large ribosomal subunit protein bL35 (65 aa).

Residues 1 to 10 (MPKMKSKSSA) show a composition bias toward basic residues. The segment at 1 to 21 (MPKMKSKSSAKMRFSVRAGGT) is disordered.

This sequence belongs to the bacterial ribosomal protein bL35 family.

This Polynucleobacter necessarius subsp. necessarius (strain STIR1) protein is Large ribosomal subunit protein bL35.